A 160-amino-acid chain; its full sequence is DNA topoisomerase small subunit (160 aa).

As to quaternary structure, part of the DNA topoisomerase complex made of gp39, gp52 and gp60. Mg(2+) is required as a cofactor.

The enzyme catalyses ATP-dependent breakage, passage and rejoining of double-stranded DNA.. In terms of biological role, small subunit of the DNA topoisomerase that untwists superhelical DNA. Controls topological states of double-stranded DNA by transient breakage and subsequent rejoining of DNA strands. The chain is DNA topoisomerase small subunit (60) from Enterobacteria phage T4 (Bacteriophage T4).